Here is a 755-residue protein sequence, read N- to C-terminus: Protein phosphatase 1E (755 aa).

Residues 21–131 form a disordered region; sequence EFRGPCGGGE…PPLPPLPRPL (111 aa). 7 consecutive repeat copies span residues 31–32, 33–34, 35–36, 37–38, 39–40, 41–42, and 43–44. The segment at 31-52 is 11 X 2 AA tandem repeats of P-E; the sequence is PEPEPEPEPEPEPESEPEPEPE. Composition is skewed to acidic residues over residues 31–68 and 77–101; these read PEPEPEPEPEPEPESEPEPEPELVEAEAAEASVEEPGE and EEGDQEQDPEPEEEAAVEGEEEEEG. Residues 45 to 46 form an 8; approximate repeat; sequence SE. 3 consecutive repeat copies span residues 47 to 48, 49 to 50, and 51 to 52. The segment covering 102-113 has biased composition (low complexity); the sequence is AATAAAAPGHSA. Over residues 114–129 the composition is skewed to pro residues; it reads VPPPPPQLPPLPPLPR. A PPM-type phosphatase domain is found at 231 to 488; it reads ETSIHAIKNM…DNITVIVVFL (258 aa). Mn(2+) contacts are provided by D273, G274, D435, and D479. The disordered stretch occupies residues 498–537; sequence SEESDWTENSFQGGQEDGGDDKENHGECKRPWPQHQCSAP. Positions 518–527 are enriched in basic and acidic residues; the sequence is DKENHGECKR. 2 positions are modified to phosphoserine: S535 and S548.

The protein belongs to the PP2C family. In terms of assembly, heterotrimer. Interacts with PAX1 and ARHGEF6 (or ARHGEF7). Mg(2+) is required as a cofactor. It depends on Mn(2+) as a cofactor.

It localises to the nucleus. Its subcellular location is the cytoplasm. It catalyses the reaction O-phospho-L-seryl-[protein] + H2O = L-seryl-[protein] + phosphate. The catalysed reaction is O-phospho-L-threonyl-[protein] + H2O = L-threonyl-[protein] + phosphate. In terms of biological role, protein phosphatase that inactivates multifunctional CaM kinases such as CAMK4 and CAMK2. Dephosphorylates and inactivates PAK. May play a role in the inhibition of actin fiber stress breakdown and in morphological changes driven by TNK2/CDC42. Dephosphorylates PRKAA2. In Homo sapiens (Human), this protein is Protein phosphatase 1E (PPM1E).